A 477-amino-acid chain; its full sequence is Endogenous retrovirus group V member 1 Env polyprotein (477 aa).

Positions 1 to 21 (MTEKFLFLYLSLLPMPLLSQA) are cleaved as a signal peptide. The Extracellular portion of the chain corresponds to 22 to 321 (QWNENSLVSF…NTTQPRQKRA (300 aa)). Asn-68 carries N-linked (GlcNAc...) asparagine glycosylation. The chain crosses the membrane as a helical span at residues 322–342 (LGLILAGMGAAIGMIAPWGGF). Topologically, residues 343 to 477 (TYHDVTLRNL…LLSPLWPLSL (135 aa)) are cytoplasmic.

Belongs to the gamma type-C retroviral envelope protein family. In terms of tissue distribution, expressed in placenta.

It is found in the membrane. In Homo sapiens (Human), this protein is Endogenous retrovirus group V member 1 Env polyprotein (ERVV-1).